We begin with the raw amino-acid sequence, 232 residues long: Triosephosphate isomerase (232 aa).

6–8 (NFK) lines the substrate pocket. His-90 acts as the Electrophile in catalysis. Glu-159 acts as the Proton acceptor in catalysis. 2 residues coordinate substrate: Gly-165 and Ser-195.

It belongs to the triosephosphate isomerase family. Homodimer.

Its subcellular location is the cytoplasm. It catalyses the reaction D-glyceraldehyde 3-phosphate = dihydroxyacetone phosphate. It functions in the pathway carbohydrate biosynthesis; gluconeogenesis. Its pathway is carbohydrate degradation; glycolysis; D-glyceraldehyde 3-phosphate from glycerone phosphate: step 1/1. Its function is as follows. Involved in the gluconeogenesis. Catalyzes stereospecifically the conversion of dihydroxyacetone phosphate (DHAP) to D-glyceraldehyde-3-phosphate (G3P). The chain is Triosephosphate isomerase from Wolinella succinogenes (strain ATCC 29543 / DSM 1740 / CCUG 13145 / JCM 31913 / LMG 7466 / NCTC 11488 / FDC 602W) (Vibrio succinogenes).